The following is a 103-amino-acid chain: Cytochrome c55X (103 aa).

The signal sequence occupies residues 1-17 (MARLALLLVLLAGTAVA). Positions 36, 39, and 40 each coordinate heme c.

In terms of processing, binds 1 heme c group covalently per subunit.

Its subcellular location is the periplasm. Its function is as follows. Monoheme c-type cytochrome. This chain is Cytochrome c55X (nirC), found in Paracoccus denitrificans (strain Pd 1222).